A 149-amino-acid chain; its full sequence is Macrodomain Ter protein (149 aa).

It belongs to the MatP family. Homodimer.

The protein localises to the cytoplasm. Required for spatial organization of the terminus region of the chromosome (Ter macrodomain) during the cell cycle. Prevents early segregation of duplicated Ter macrodomains during cell division. Binds specifically to matS, which is a 13 bp signature motif repeated within the Ter macrodomain. The sequence is that of Macrodomain Ter protein from Vibrio campbellii (strain ATCC BAA-1116).